The sequence spans 379 residues: tRNA-specific 2-thiouridylase MnmA (379 aa).

ATP contacts are provided by residues Ala6 to Ser13 and Leu32. Catalysis depends on Cys101, which acts as the Nucleophile. Cys101 and Cys199 are oxidised to a cystine. Gly125 is a binding site for ATP. An interaction with tRNA region spans residues Lys148–Gln150. The active-site Cysteine persulfide intermediate is Cys199.

The protein belongs to the MnmA/TRMU family.

It localises to the cytoplasm. The enzyme catalyses S-sulfanyl-L-cysteinyl-[protein] + uridine(34) in tRNA + AH2 + ATP = 2-thiouridine(34) in tRNA + L-cysteinyl-[protein] + A + AMP + diphosphate + H(+). Catalyzes the 2-thiolation of uridine at the wobble position (U34) of tRNA, leading to the formation of s(2)U34. In Arthrobacter sp. (strain FB24), this protein is tRNA-specific 2-thiouridylase MnmA.